Reading from the N-terminus, the 314-residue chain is MPDMKLFAGNATPELAQRIADRLYISLGDASVSRFSDGEVAVQINENVRGSDVFIIQSTCAPTNDNLMELVVMIDAMRRASAGRITAVIPYFGYARQDRRVRSARVPITAKVVADFLSNVGVDRVLTIDLHAEQIQGFFDVPVDNIFGTPVLLEDMQSRGLDNPVVVSPDLGGVVRARATAKALGDIDIAIVDKRRPRANVSEVMNLIGDVEGRDCVIVDDMIDTGGTLCKAAEALKERGAKRVFAYATHAVFSGNAADNIKNSVLDQVIVTDSISLSKEMAATGKVTTLSLSRMLAEAIRRISNEESISAMFN.

ATP is bound by residues 37-39 and 96-97; these read DGE and RQ. Residues His131 and Asp170 each contribute to the Mg(2+) site. Lys194 is a catalytic residue. D-ribose 5-phosphate is bound by residues Arg196, Asp220, and 224-228; that span reads DTGGT.

This sequence belongs to the ribose-phosphate pyrophosphokinase family. Class I subfamily. Homohexamer. The cofactor is Mg(2+).

The protein resides in the cytoplasm. It catalyses the reaction D-ribose 5-phosphate + ATP = 5-phospho-alpha-D-ribose 1-diphosphate + AMP + H(+). It functions in the pathway metabolic intermediate biosynthesis; 5-phospho-alpha-D-ribose 1-diphosphate biosynthesis; 5-phospho-alpha-D-ribose 1-diphosphate from D-ribose 5-phosphate (route I): step 1/1. Its function is as follows. Involved in the biosynthesis of the central metabolite phospho-alpha-D-ribosyl-1-pyrophosphate (PRPP) via the transfer of pyrophosphoryl group from ATP to 1-hydroxyl of ribose-5-phosphate (Rib-5-P). This chain is Ribose-phosphate pyrophosphokinase, found in Vibrio parahaemolyticus serotype O3:K6 (strain RIMD 2210633).